Reading from the N-terminus, the 619-residue chain is MIAFTDIVGMDLAKQALMLLAVDPSLGGVVIPSTVGSGKSTLARAFADILPEGTPFVELPLNVTEDRLIGGVDLEATLASGQRVVQHGVLSKAHKGVLYVDSLSLLDSSAVSHIMDAMSRGAVIVEREGLSEVHPADFMLVGTYDPSDGEVRMGLLDRIGIIVPFTPVNDYRARKQIVSLVMGTRNEEDTQDELRMLRGIIGAAREQLHHVSITNEQIKGLIQTAISLGVEGNRVDIFAIRAALANAALGQRTEVDDEDLKLAVKLVLVPRATRMPEREPSEEEMQQEEPPPPEEQPEQEGEDENAPPDETDSDADEEQEETPDMIEELMMDAIETDLPENILNISLASKKKAKSGSRGEALNNKRGRFVRSQPGEIKSGKVALIPTLISAAPWQAARKAEKAKKGIKTGALVISTDDVKIKRFRDKSGTLFIFMVDASGSMALNRMRQAKGAVASLLQNAYVHRDQVSLISFRGKQAQVLLPPSQSVDRAKRELDVLPTGGGTPLASALLTGWETAKQARTKGITQIMFVMITDGRGNIPLAAAVDPAAAKAPKEELEKEVEALALSIQSDGIASIVVDTQMNYLSRGEAPKLAQKLGGRYFYLPNAKAEQIVEAALS.

ATP is bound at residue 33 to 40; that stretch reads STVGSGKS. The segment at 273 to 321 is disordered; the sequence is TRMPEREPSEEEMQQEEPPPPEEQPEQEGEDENAPPDETDSDADEEQEE. Positions 280-321 are enriched in acidic residues; that stretch reads PSEEEMQQEEPPPPEEQPEQEGEDENAPPDETDSDADEEQEE. In terms of domain architecture, VWFA spans 431–619; sequence LFIFMVDASG…AEQIVEAALS (189 aa).

It belongs to the Mg-chelatase subunits D/I family.

The enzyme catalyses protoporphyrin IX + Mg(2+) + ATP + H2O = Mg-protoporphyrin IX + ADP + phosphate + 3 H(+). It functions in the pathway porphyrin-containing compound metabolism; bacteriochlorophyll biosynthesis. Functionally, involved in bacteriochlorophyll biosynthesis; introduces a magnesium ion into protoporphyrin IX to yield Mg-protoporphyrin IX. This Chlorobaculum parvum (strain DSM 263 / NCIMB 8327) (Chlorobium vibrioforme subsp. thiosulfatophilum) protein is Magnesium-chelatase 67 kDa subunit (bchD).